The following is a 359-amino-acid chain: Nicotinate-nucleotide--dimethylbenzimidazole phosphoribosyltransferase (359 aa).

E318 functions as the Proton acceptor in the catalytic mechanism.

The protein belongs to the CobT family. Homodimer.

It catalyses the reaction 5,6-dimethylbenzimidazole + nicotinate beta-D-ribonucleotide = alpha-ribazole 5'-phosphate + nicotinate + H(+). It participates in nucleoside biosynthesis; alpha-ribazole biosynthesis; alpha-ribazole from 5,6-dimethylbenzimidazole: step 1/2. In terms of biological role, catalyzes the synthesis of alpha-ribazole-5'-phosphate from nicotinate mononucleotide (NAMN) and 5,6-dimethylbenzimidazole (DMB). This Escherichia coli (strain SMS-3-5 / SECEC) protein is Nicotinate-nucleotide--dimethylbenzimidazole phosphoribosyltransferase.